The sequence spans 335 residues: Trans-3-hydroxy-L-proline dehydratase (335 aa).

Residue Cys-91 is the Proton acceptor of the active site. Residues 92–93, His-222, and 256–257 each bind substrate; these read GH and GS.

The protein belongs to the proline racemase family. Homodimer.

The catalysed reaction is trans-3-hydroxy-L-proline = 1-pyrroline-2-carboxylate + H2O. Functionally, catalyzes the dehydration of trans-3-hydroxy-L-proline (t3LHyp) to Delta(1)-pyrroline-2-carboxylate (Pyr2C). Does not possess neither proline racemase nor 4-hydroxyproline 2-epimerase activities. The polypeptide is Trans-3-hydroxy-L-proline dehydratase (Burkholderia cenocepacia (strain HI2424)).